The primary structure comprises 122 residues: Large ribosomal subunit protein uL22 (122 aa).

Positions 102–122 are disordered; the sequence is VAEGKEMKSSKSHKKNQAEGK.

This sequence belongs to the universal ribosomal protein uL22 family. Part of the 50S ribosomal subunit.

This protein binds specifically to 23S rRNA; its binding is stimulated by other ribosomal proteins, e.g. L4, L17, and L20. It is important during the early stages of 50S assembly. It makes multiple contacts with different domains of the 23S rRNA in the assembled 50S subunit and ribosome. Its function is as follows. The globular domain of the protein is located near the polypeptide exit tunnel on the outside of the subunit, while an extended beta-hairpin is found that lines the wall of the exit tunnel in the center of the 70S ribosome. The chain is Large ribosomal subunit protein uL22 from Helicobacter pylori (strain ATCC 700392 / 26695) (Campylobacter pylori).